A 376-amino-acid chain; its full sequence is Alpha-2,8-sialyltransferase 8E (376 aa).

The helical transmembrane segment at 17–37 (TLLFIFICAFALVTLLQQILY) threads the bilayer. An N-linked (GlcNAc...) asparagine glycan is attached at asparagine 56. Disulfide bonds link cysteine 164–cysteine 313 and cysteine 178–cysteine 373. Residues asparagine 192 and 214–216 (NPS) each bind substrate. N-linked (GlcNAc...) asparagine glycosylation occurs at asparagine 241. 300 to 302 (STG) contacts substrate. The active-site Proton donor/acceptor is histidine 348.

This sequence belongs to the glycosyltransferase 29 family. In terms of tissue distribution, expressed in liver.

The protein localises to the golgi apparatus membrane. The catalysed reaction is a ganglioside GT1b (d18:1(4E)) + CMP-N-acetyl-beta-neuraminate = a ganglioside GQ1b (d18:1(4E)) + CMP + H(+). It catalyses the reaction a ganglioside GQ1c (d18:1(4E)) + CMP-N-acetyl-beta-neuraminate = a ganglioside GP1c (d18:1(4E)) + CMP + H(+). The enzyme catalyses a ganglioside GD3 (d18:1(4E)) + CMP-N-acetyl-beta-neuraminate = a ganglioside GT3 (d18:1(4E)) + CMP + H(+). It carries out the reaction a ganglioside GD1a (d18:1(4E)) + CMP-N-acetyl-beta-neuraminate = a ganglioside GT1a (d18:1(4E)) + CMP + H(+). The catalysed reaction is a ganglioside GM1b (d18:1(4E)) + CMP-N-acetyl-beta-neuraminate = a ganglioside GD1c (d18:1(4E)) + CMP + H(+). It participates in protein modification; protein glycosylation. In terms of biological role, involved in the synthesis of gangliosides GD1c, GT1a, GQ1b, GP1c and GT3 from GD1a, GT1b, GM1b and GD3 respectively. The sequence is that of Alpha-2,8-sialyltransferase 8E from Rattus norvegicus (Rat).